The following is a 352-amino-acid chain: Alpha-2-HS-glycoprotein (352 aa).

Positions 1–18 are cleaved as a signal peptide; it reads MKSLVLLLCFAQLWSCQS. A Cystatin fetuin-A-type 1 domain is found at 19-133; the sequence is APQGAGLGFR…QFRVLHAQCH (115 aa). 6 disulfide bridges follow: cysteine 32–cysteine 343, cysteine 89–cysteine 100, cysteine 114–cysteine 132, cysteine 146–cysteine 149, cysteine 208–cysteine 219, and cysteine 230–cysteine 247. N-linked (GlcNAc...) asparagine glycosylation is present at asparagine 99. At serine 134 the chain carries Phosphoserine. Threonine 135 carries the post-translational modification Phosphothreonine. Serine 138 is modified (phosphoserine). The 107-residue stretch at 144–250 folds into the Cystatin fetuin-A-type 2 domain; the sequence is KFCPRCPILI…EEVSVACKLF (107 aa). 2 N-linked (GlcNAc...) asparagine glycosylation sites follow: asparagine 156 and asparagine 176. Residues 256–273 are compositionally biased toward low complexity; that stretch reads PANANPAGPAPTVGQAAP. Positions 256–280 are disordered; sequence PANANPAGPAPTVGQAAPVAPPAGP. Phosphoserine occurs at positions 309, 313, 316, and 318. The segment at 319 to 338 is disordered; the sequence is GEVLHSPKVGQPGDAGAAGP. Over residues 328-338 the composition is skewed to low complexity; it reads GQPGDAGAAGP.

The protein belongs to the fetuin family. In terms of processing, undergoes complex post-translational modification involving N-glycosylation, and addition of fucose and sialic acid residues. Phosphorylation occurs at a serine residue. Post-translationally, phosphorylated by FAM20C in the extracellular medium. As to expression, synthesized in liver and secreted by the hepatocytes in the blood.

It localises to the secreted. Functionally, could inhibit both insulin-receptor tyrosine kinase activity and insulin-stimulated receptor autophosphorylation and, concomitantly, antagonize the mitogenic effect of the hormone in cultured rat hepatoma cells. The sequence is that of Alpha-2-HS-glycoprotein (Ahsg) from Rattus norvegicus (Rat).